Here is a 368-residue protein sequence, read N- to C-terminus: tRNA-specific 2-thiouridylase MnmA (368 aa).

ATP contacts are provided by residues 11–18 (GMSGGVDS) and Met-37. The tract at residues 97-99 (NPD) is interaction with target base in tRNA. The active-site Nucleophile is Cys-102. Cys-102 and Cys-199 are disulfide-bonded. ATP is bound at residue Gly-127. Residues 149–151 (KDQ) are interaction with tRNA. The active-site Cysteine persulfide intermediate is Cys-199. The interaction with tRNA stretch occupies residues 311 to 312 (RY).

It belongs to the MnmA/TRMU family. Interacts with TusE.

The protein resides in the cytoplasm. The enzyme catalyses S-sulfanyl-L-cysteinyl-[protein] + uridine(34) in tRNA + AH2 + ATP = 2-thiouridine(34) in tRNA + L-cysteinyl-[protein] + A + AMP + diphosphate + H(+). Functionally, catalyzes the 2-thiolation of uridine at the wobble position (U34) of tRNA(Lys), tRNA(Glu) and tRNA(Gln), leading to the formation of s(2)U34, the first step of tRNA-mnm(5)s(2)U34 synthesis. Sulfur is provided by IscS, via a sulfur-relay system. Binds ATP and its substrate tRNAs. The chain is tRNA-specific 2-thiouridylase MnmA from Citrobacter koseri (strain ATCC BAA-895 / CDC 4225-83 / SGSC4696).